Reading from the N-terminus, the 160-residue chain is Non-secretory ribonuclease (160 aa).

Residues 1–27 (MVPKLFTSQICLLLLLGLMGVEGSLHA) form the signal peptide. C-linked (Man) tryptophan glycosylation occurs at tryptophan 34. The active-site Proton acceptor is the histidine 42. Asparagine 44 carries an N-linked (GlcNAc...) asparagine glycan. 4 disulfides stabilise this stretch: cysteine 50-cysteine 110, cysteine 64-cysteine 122, cysteine 82-cysteine 137, and cysteine 89-cysteine 98. At tyrosine 60 the chain carries 3'-nitrotyrosine. 65 to 69 (KNQNT) provides a ligand contact to substrate. N-linked (GlcNAc...) asparagine glycans are attached at residues asparagine 92, asparagine 111, and asparagine 138. The active-site Proton donor is histidine 155.

Belongs to the pancreatic ribonuclease family. In terms of assembly, interacts with and forms a tight 1:1 complex with RNH1. Dimerization of two such complexes may occur.

The protein resides in the lysosome. It is found in the cytoplasmic granule. It carries out the reaction an [RNA] containing cytidine + H2O = an [RNA]-3'-cytidine-3'-phosphate + a 5'-hydroxy-ribonucleotide-3'-[RNA].. The catalysed reaction is an [RNA] containing uridine + H2O = an [RNA]-3'-uridine-3'-phosphate + a 5'-hydroxy-ribonucleotide-3'-[RNA].. This is a non-secretory ribonuclease. It is a pyrimidine specific nuclease with a slight preference for U. Cytotoxin and helminthotoxin. Possesses a wide variety of biological activities. The protein is Non-secretory ribonuclease (RNASE2) of Macaca fascicularis (Crab-eating macaque).